The sequence spans 177 residues: Large ribosomal subunit protein uL6 (177 aa).

The protein belongs to the universal ribosomal protein uL6 family. As to quaternary structure, part of the 50S ribosomal subunit.

Its function is as follows. This protein binds to the 23S rRNA, and is important in its secondary structure. It is located near the subunit interface in the base of the L7/L12 stalk, and near the tRNA binding site of the peptidyltransferase center. The sequence is that of Large ribosomal subunit protein uL6 from Mesorhizobium japonicum (strain LMG 29417 / CECT 9101 / MAFF 303099) (Mesorhizobium loti (strain MAFF 303099)).